A 151-amino-acid chain; its full sequence is Large ribosomal subunit protein bL9 (151 aa).

Belongs to the bacterial ribosomal protein bL9 family.

In terms of biological role, binds to the 23S rRNA. The sequence is that of Large ribosomal subunit protein bL9 from Nitrosospira multiformis (strain ATCC 25196 / NCIMB 11849 / C 71).